The following is a 170-amino-acid chain: Putative 3-methyladenine DNA glycosylase (170 aa).

The protein belongs to the DNA glycosylase MPG family.

This is Putative 3-methyladenine DNA glycosylase from Sodalis glossinidius.